A 375-amino-acid chain; its full sequence is Probable UDP-N-acetylglucosamine 2-epimerase (375 aa).

It belongs to the UDP-N-acetylglucosamine 2-epimerase family.

The protein localises to the cytoplasm. It carries out the reaction UDP-N-acetyl-alpha-D-glucosamine = UDP-N-acetyl-alpha-D-mannosamine. The protein operates within glycan metabolism; exopolysaccharide EPS I biosynthesis. May be involved in synthesis of N-acetyltrideoxygalactose, a component of exopolysaccharide EPS I which functions as a virulence factor. In Ralstonia solanacearum (Pseudomonas solanacearum), this protein is Probable UDP-N-acetylglucosamine 2-epimerase (epsC).